The following is a 270-amino-acid chain: MRTIRHKAYKSLGQNFILDPSMAEKIVSYAGSIEGYNIIEVGPGFGTMTEIILRSKVASLLAIEKDRRLSPMHKGLMQKYPNYRYIEHDVLEINLETMISAPSKMIANLPYNISVILLLRMLKYIHNFEKLTLMFQKEVAERLVAKPGTKSYSILSVLVQLLCDVEKVKDLQPGAFSPPPKVCSSVVNITPLGNLRFPVDYSYMLKMLKKAFGCKRKTVRNALGLPHQEFDALLAECRIPPSVRAENLSVEQLCAVSNFLQSRQYQFSTG.

Residues Asn15, Ile17, Gly42, Glu64, Asp89, and Asn108 each coordinate S-adenosyl-L-methionine.

It belongs to the class I-like SAM-binding methyltransferase superfamily. rRNA adenine N(6)-methyltransferase family. RsmA subfamily.

It localises to the cytoplasm. It carries out the reaction adenosine(1518)/adenosine(1519) in 16S rRNA + 4 S-adenosyl-L-methionine = N(6)-dimethyladenosine(1518)/N(6)-dimethyladenosine(1519) in 16S rRNA + 4 S-adenosyl-L-homocysteine + 4 H(+). Specifically dimethylates two adjacent adenosines (A1518 and A1519) in the loop of a conserved hairpin near the 3'-end of 16S rRNA in the 30S particle. May play a critical role in biogenesis of 30S subunits. The polypeptide is Ribosomal RNA small subunit methyltransferase A (Anaplasma marginale (strain Florida)).